The chain runs to 932 residues: AP-3 complex subunit delta (932 aa).

The residue at position 2 (Thr-2) is an N-acetylthreonine. 12 HEAT repeats span residues 157 to 194 (SLAR…QYPE), 196 to 231 (LRDN…KNPQ), 233 to 269 (FIQL…VEPK), 270 to 307 (LRAK…LEED), 310 to 346 (ETAM…KINT), 347 to 384 (DFIS…EDNL), 386 to 425 (AIVQ…ENYK), 427 to 466 (KMVN…DISD), 490 to 527 (VTIA…TLVE), 528 to 564 (NGND…NWCN), 570 to 601 (KRFE…ERSV), and 602 to 638 (EVLE…AYEL). Phosphoserine is present on residues Ser-700 and Ser-727. The interval 720-868 (EREKERMSNP…EEGNLRKEDE (149 aa)) is disordered. Basic and acidic residues-rich tracts occupy residues 738 to 747 (ERTKNSKDLL) and 755 to 766 (SDKKPETIRLNR). The residue at position 767 (Thr-767) is a Phosphothreonine. Over residues 767–779 (TDNSLNSLSLSTT) the composition is skewed to low complexity. Phosphoserine is present on residues Ser-770 and Ser-773. Basic residues predominate over residues 783-793 (RKKKKGKKKNR). The residue at position 798 (Ser-798) is a Phosphoserine. The segment covering 806-832 (APKRKDAFQKPHDNHSTQNPLKKDKIN) has biased composition (basic and acidic residues). Residues 838 to 855 (QLENFDFSNFGQSSNAGR) show a composition bias toward polar residues. The segment covering 857–868 (SQEEGNLRKEDE) has biased composition (basic and acidic residues). Positions 858–878 (QEEGNLRKEDELELSRLEANL) form a coiled coil. Ser-888 bears the Phosphoserine mark. Basic residues predominate over residues 897 to 915 (KKKKKGKKSKSKNKLKTKA). Residues 897-932 (KKKKKGKKSKSKNKLKTKAKNSPEPNEFLRDQSTDI) form a disordered region. Ser-918 carries the phosphoserine modification. Positions 923-932 (EFLRDQSTDI) are enriched in basic and acidic residues.

Belongs to the adaptor complexes large subunit family. Adaptor protein complex 3 (AP-3) is a heterotetramer composed of 2 large adaptins (APL5 and APL6), a medium adaptin (APM3) and a small adaptin (APS3). Interacts with VPS41.

The protein resides in the golgi apparatus. It localises to the cytoplasmic vesicle. The protein localises to the clathrin-coated vesicle membrane. Its function is as follows. Part of the AP-3 complex, an adaptor-related complex which is not clathrin-associated. The complex is associated with the Golgi region as well as more peripheral structures. It facilitates the budding of vesicles from the Golgi membrane and may be directly involved in trafficking to the vacuole. Required for the transport via the ALP pathway, which directs the transport of the cargo proteins PHO8 and VAM3 to the vacuole. The chain is AP-3 complex subunit delta (APL5) from Saccharomyces cerevisiae (strain ATCC 204508 / S288c) (Baker's yeast).